The following is a 571-amino-acid chain: ATP-dependent RNA helicase RhlB (571 aa).

A Q motif motif is present at residues 9–37; it reads VTFSSFDLHPALIAGLESAGFTRCTPIQA. The Helicase ATP-binding domain maps to 40–220; that stretch reads LPVALPGGDV…YEHMNEPEKL (181 aa). Residue 53–60 participates in ATP binding; the sequence is AQTGTGKT. Residues 166–169 carry the DEAD box motif; it reads DEAD. Residues 231–393 form the Helicase C-terminal domain; it reads RVRQRIYFPS…PVTSELLTPL (163 aa). The segment at 391–558 is disordered; the sequence is TPLPRAPRVP…KPSGSPSLLS (168 aa). Acidic residues predominate over residues 402-411; that stretch reads EGEEADDDAG. Over residues 419 to 432 the composition is skewed to basic and acidic residues; that stretch reads REAREQRAAEEQRR. A compositionally biased stretch (gly residues) spans 435 to 448; it reads GRGGPGGSRSGSGG. Basic and acidic residues predominate over residues 449–460; the sequence is GRRDGAGADGKP. Over residues 483–497 the composition is skewed to low complexity; it reads VVAAVAAQAPSAGVA. The segment covering 503 to 512 has biased composition (basic residues); sequence PRKRRRRRNG. Residues 539–558 show a composition bias toward low complexity; that stretch reads VVAKPVRAAAKPSGSPSLLS.

The protein belongs to the DEAD box helicase family. RhlB subfamily. In terms of assembly, component of the RNA degradosome, which is a multiprotein complex involved in RNA processing and mRNA degradation.

The protein localises to the cytoplasm. It catalyses the reaction ATP + H2O = ADP + phosphate + H(+). DEAD-box RNA helicase involved in RNA degradation. Has RNA-dependent ATPase activity and unwinds double-stranded RNA. This is ATP-dependent RNA helicase RhlB from Xanthomonas axonopodis pv. citri (strain 306).